Consider the following 312-residue polypeptide: TATA box-binding protein-like 2 (312 aa).

Positions 65 to 115 are disordered; it reads DELSTQDEPSQVEKESKNEDSGIYTDCPQKESTQADIDTSNSAQNTSQFNL. The segment covering 75–84 has biased composition (basic and acidic residues); the sequence is QVEKESKNED. Residues 94–115 show a composition bias toward polar residues; that stretch reads KESTQADIDTSNSAQNTSQFNL.

It belongs to the TBP family. As to expression, in adults, expressed in the gonads, with expression much higher in the ovary than the testis (at protein level). Shows a small amount of expression in other adult organs, including the brain and kidney. Embryonic expression is mostly ubiquitous except in early gastrula embryos where expression is asymmetric.

It is found in the nucleus. TATA box-binding transcription factor. Members of the TBP family are differentially required to regulate transcription and development during early embryogenesis. Commits mesoderm to the hematopoietic lineage during hemopoiesis, acting via mespa. Binds to the mespa promoter. In Danio rerio (Zebrafish), this protein is TATA box-binding protein-like 2.